We begin with the raw amino-acid sequence, 315 residues long: MKFKHKSVLLHETIDNLNPKDDGLYVDATFGGGGHARYLLSKLNRGTVIGFDQDEYAISMAKESFAEELKPGAEPKLILVHDNFCHLKENLVELGISDGIDGIYYDLGVSSPQFDQPERGFSYRFDARLDMRMDQSQELDAYTIVNTWSQKELSDILYKYGDEKFSRQIARKIVDRRREKPIVTTFDLVDVIKDAIPAYARRSGGHPAKKSFQAIRVAVNNELGVLQESLEEAIKLLKPGGRISVITFQSHEDKIVKKIFKKYSEVEIPRGMPMIPADSKPTLRLISRKPIMASSDELEENNRSHSAKLRVAEKL.

S-adenosyl-L-methionine-binding positions include 33–35, aspartate 52, phenylalanine 84, aspartate 106, and glutamine 113; that span reads GGH. The disordered stretch occupies residues 295 to 315; the sequence is SDELEENNRSHSAKLRVAEKL.

This sequence belongs to the methyltransferase superfamily. RsmH family.

It localises to the cytoplasm. The enzyme catalyses cytidine(1402) in 16S rRNA + S-adenosyl-L-methionine = N(4)-methylcytidine(1402) in 16S rRNA + S-adenosyl-L-homocysteine + H(+). Specifically methylates the N4 position of cytidine in position 1402 (C1402) of 16S rRNA. The sequence is that of Ribosomal RNA small subunit methyltransferase H from Lactobacillus gasseri (strain ATCC 33323 / DSM 20243 / BCRC 14619 / CIP 102991 / JCM 1131 / KCTC 3163 / NCIMB 11718 / NCTC 13722 / AM63).